The primary structure comprises 368 residues: Methylthioribose-1-phosphate isomerase (368 aa).

Residues 54–56 (RGA), Arg91, and Gln204 contribute to the substrate site. The Proton donor role is filled by Asp245. 255–256 (NK) provides a ligand contact to substrate.

The protein belongs to the eIF-2B alpha/beta/delta subunits family. MtnA subfamily.

It carries out the reaction 5-(methylsulfanyl)-alpha-D-ribose 1-phosphate = 5-(methylsulfanyl)-D-ribulose 1-phosphate. The protein operates within amino-acid biosynthesis; L-methionine biosynthesis via salvage pathway; L-methionine from S-methyl-5-thio-alpha-D-ribose 1-phosphate: step 1/6. Catalyzes the interconversion of methylthioribose-1-phosphate (MTR-1-P) into methylthioribulose-1-phosphate (MTRu-1-P). This chain is Methylthioribose-1-phosphate isomerase, found in Gluconobacter oxydans (strain 621H) (Gluconobacter suboxydans).